The chain runs to 280 residues: Hydrolase MT0498 (280 aa).

The 251-residue stretch at 1–251 (MRIALAQIRS…PQLLVADIDV (251 aa)) folds into the CN hydrolase domain. Catalysis depends on glutamate 40, which acts as the Proton acceptor. Lysine 110 acts as the Proton donor in catalysis. Cysteine 146 functions as the Nucleophile in the catalytic mechanism.

This sequence belongs to the carbon-nitrogen hydrolase superfamily. NIT1/NIT2 family.

This chain is Hydrolase MT0498, found in Mycobacterium tuberculosis (strain CDC 1551 / Oshkosh).